The sequence spans 120 residues: NAD(P)H-quinone oxidoreductase subunit 3, chloroplastic (120 aa).

A run of 3 helical transmembrane segments spans residues 9–29 (IFWA…LISG), 64–84 (MFAL…PWAM), and 88–108 (VLGV…IVGS).

Belongs to the complex I subunit 3 family. NDH is composed of at least 16 different subunits, 5 of which are encoded in the nucleus.

It localises to the plastid. It is found in the chloroplast thylakoid membrane. It catalyses the reaction a plastoquinone + NADH + (n+1) H(+)(in) = a plastoquinol + NAD(+) + n H(+)(out). The enzyme catalyses a plastoquinone + NADPH + (n+1) H(+)(in) = a plastoquinol + NADP(+) + n H(+)(out). In terms of biological role, NDH shuttles electrons from NAD(P)H:plastoquinone, via FMN and iron-sulfur (Fe-S) centers, to quinones in the photosynthetic chain and possibly in a chloroplast respiratory chain. The immediate electron acceptor for the enzyme in this species is believed to be plastoquinone. Couples the redox reaction to proton translocation, and thus conserves the redox energy in a proton gradient. This Carica papaya (Papaya) protein is NAD(P)H-quinone oxidoreductase subunit 3, chloroplastic.